Reading from the N-terminus, the 156-residue chain is Pre-mRNA-splicing factor SNT309 (156 aa).

As to quaternary structure, associated with the spliceosome.

The protein localises to the nucleus. Functionally, involved in pre-mRNA splicing. The protein is Pre-mRNA-splicing factor SNT309 (SNT309) of Candida glabrata (strain ATCC 2001 / BCRC 20586 / JCM 3761 / NBRC 0622 / NRRL Y-65 / CBS 138) (Yeast).